Reading from the N-terminus, the 427-residue chain is Trigger factor (427 aa).

Positions 163 to 248 (GDTVVIDFVG…IHEVKAKEVP (86 aa)) constitute a PPIase FKBP-type domain.

The protein belongs to the FKBP-type PPIase family. Tig subfamily.

The protein localises to the cytoplasm. The catalysed reaction is [protein]-peptidylproline (omega=180) = [protein]-peptidylproline (omega=0). Functionally, involved in protein export. Acts as a chaperone by maintaining the newly synthesized protein in an open conformation. Functions as a peptidyl-prolyl cis-trans isomerase. The polypeptide is Trigger factor (Streptococcus suis (strain 05ZYH33)).